The primary structure comprises 121 residues: Large ribosomal subunit protein uL18 (121 aa).

This sequence belongs to the universal ribosomal protein uL18 family. Part of the 50S ribosomal subunit; part of the 5S rRNA/L5/L18/L25 subcomplex. Contacts the 5S and 23S rRNAs.

Functionally, this is one of the proteins that bind and probably mediate the attachment of the 5S RNA into the large ribosomal subunit, where it forms part of the central protuberance. This chain is Large ribosomal subunit protein uL18, found in Herpetosiphon aurantiacus (strain ATCC 23779 / DSM 785 / 114-95).